The sequence spans 539 residues: Chaperonin GroEL (539 aa).

Residues 29–32, 86–90, Gly-413, 477–479, and Asp-493 each bind ATP; these read TLGP, DGTTT, and DAL.

This sequence belongs to the chaperonin (HSP60) family. As to quaternary structure, forms a cylinder of 14 subunits composed of two heptameric rings stacked back-to-back. Interacts with the co-chaperonin GroES.

The protein resides in the cytoplasm. It carries out the reaction ATP + H2O + a folded polypeptide = ADP + phosphate + an unfolded polypeptide.. Functionally, together with its co-chaperonin GroES, plays an essential role in assisting protein folding. The GroEL-GroES system forms a nano-cage that allows encapsulation of the non-native substrate proteins and provides a physical environment optimized to promote and accelerate protein folding. The chain is Chaperonin GroEL from Clostridium perfringens (strain ATCC 13124 / DSM 756 / JCM 1290 / NCIMB 6125 / NCTC 8237 / Type A).